Here is a 210-residue protein sequence, read N- to C-terminus: Thymidylate kinase (210 aa).

Gly9 to Ser16 lines the ATP pocket.

This sequence belongs to the thymidylate kinase family.

It catalyses the reaction dTMP + ATP = dTDP + ADP. Its function is as follows. Phosphorylation of dTMP to form dTDP in both de novo and salvage pathways of dTTP synthesis. This chain is Thymidylate kinase, found in Aliivibrio fischeri (strain MJ11) (Vibrio fischeri).